Consider the following 176-residue polypeptide: Cytochrome b (176 aa).

Helical transmembrane passes span 33–53 (FGSLLGICLGLQILTGLFLAM), 77–98 (WVLRYLHANGASMFFICLYLHV), and 113–133 (WNMGVVLLFAVMATAFMGYVL). The heme b site is built by His-83 and His-97.

It belongs to the cytochrome b family. In terms of assembly, the cytochrome bc1 complex contains 11 subunits: 3 respiratory subunits (MT-CYB, CYC1 and UQCRFS1), 2 core proteins (UQCRC1 and UQCRC2) and 6 low-molecular weight proteins (UQCRH/QCR6, UQCRB/QCR7, UQCRQ/QCR8, UQCR10/QCR9, UQCR11/QCR10 and a cleavage product of UQCRFS1). This cytochrome bc1 complex then forms a dimer. The cofactor is heme b.

The protein localises to the mitochondrion inner membrane. Functionally, component of the ubiquinol-cytochrome c reductase complex (complex III or cytochrome b-c1 complex) that is part of the mitochondrial respiratory chain. The b-c1 complex mediates electron transfer from ubiquinol to cytochrome c. Contributes to the generation of a proton gradient across the mitochondrial membrane that is then used for ATP synthesis. The polypeptide is Cytochrome b (MT-CYB) (Nycticeius humeralis (Evening bat)).